The primary structure comprises 874 residues: Speckle targeted PIP5K1A-regulated poly(A) polymerase (874 aa).

A Matrin-type zinc finger spans residues 16 to 46 (FRCCLCHVTTANRPSLDAHLGGRKHRHLVEL). The region spanning 56-128 (RSVFVSGFPR…HRLRVRPREQ (73 aa)) is the RRM domain. The tract at residues 113-146 (QHSLGGHRLRVRPREQKEFQSPASKSPKGAAPDS) is disordered. Ser-205 serves as a coordination point for ATP. Positions 216 and 218 each coordinate Mg(2+). 2 residues coordinate UTP: Asp-216 and Asp-218. The interval 252 to 334 (QALACTPASP…ELAETPKEEK (83 aa)) is disordered. A compositionally biased stretch (pro residues) spans 259-269 (ASPPDSQPPAS). Residues 280-291 (TPSSSLAPQTPD) show a composition bias toward polar residues. Asn-392 is an ATP binding site. UTP contacts are provided by Asn-392, Arg-414, Tyr-432, and His-549. The PAP-associated domain maps to 491 to 549 (LSSLLAQFFSCVSCWDLRGSLLSLREGQALPVAGGLPSNLWEGLRLGPLNLQDPFDLSH). Positions 598 to 874 (SSPSSLLSAT…FLPQAIRHLK (277 aa)) are KA1; binds the bulging loops of U6 snRNA but is dispensable for terminal uridylyltransferase activity. Disordered regions lie at residues 638 to 662 (ATKR…KRLK) and 705 to 761 (MQSP…ASLP). Ser-750 carries the phosphoserine modification.

This sequence belongs to the DNA polymerase type-B-like family. Associates with the cleavage and polyadenylation specificity factor (CPSF) complex. Interacts with CPSF1 and CPSF3; the interaction is direct. Interacts with PIP5K1A. Requires Mg(2+) as cofactor. Mn(2+) serves as cofactor. In terms of processing, phosphorylated by CK1 in the proline-rich (Pro-rich) region. Widely expressed.

The protein resides in the nucleus. It is found in the nucleolus. It localises to the nucleus speckle. The catalysed reaction is RNA(n) + UTP = RNA(n)-3'-uridine ribonucleotide + diphosphate. The enzyme catalyses RNA(n) + ATP = RNA(n)-3'-adenine ribonucleotide + diphosphate. With respect to regulation, adenylyltransferase activity is specifically phosphatidylinositol 4,5-bisphosphate (PtdIns(4,5)P2). In terms of biological role, poly(A) polymerase that creates the 3'-poly(A) tail of specific pre-mRNAs. Localizes to nuclear speckles together with PIP5K1A and mediates polyadenylation of a select set of mRNAs, such as HMOX1. In addition to polyadenylation, it is also required for the 3'-end cleavage of pre-mRNAs: binds to the 3'UTR of targeted pre-mRNAs and promotes the recruitment and assembly of the CPSF complex on the 3'UTR of pre-mRNAs. In addition to adenylyltransferase activity, also has uridylyltransferase activity. However, the ATP ratio is higher than UTP in cells, suggesting that it functions primarily as a poly(A) polymerase. Acts as a specific terminal uridylyltransferase for U6 snRNA in vitro: responsible for a controlled elongation reaction that results in the restoration of the four 3'-terminal UMP-residues found in newly transcribed U6 snRNA. Not involved in replication-dependent histone mRNA degradation. The protein is Speckle targeted PIP5K1A-regulated poly(A) polymerase (TUT1) of Homo sapiens (Human).